We begin with the raw amino-acid sequence, 208 residues long: ATP phosphoribosyltransferase (208 aa).

Belongs to the ATP phosphoribosyltransferase family. Short subfamily. Heteromultimer composed of HisG and HisZ subunits.

The protein localises to the cytoplasm. It catalyses the reaction 1-(5-phospho-beta-D-ribosyl)-ATP + diphosphate = 5-phospho-alpha-D-ribose 1-diphosphate + ATP. Its pathway is amino-acid biosynthesis; L-histidine biosynthesis; L-histidine from 5-phospho-alpha-D-ribose 1-diphosphate: step 1/9. Catalyzes the condensation of ATP and 5-phosphoribose 1-diphosphate to form N'-(5'-phosphoribosyl)-ATP (PR-ATP). Has a crucial role in the pathway because the rate of histidine biosynthesis seems to be controlled primarily by regulation of HisG enzymatic activity. The protein is ATP phosphoribosyltransferase of Thermotoga neapolitana (strain ATCC 49049 / DSM 4359 / NBRC 107923 / NS-E).